A 297-amino-acid polypeptide reads, in one-letter code: MVEVRVPATSANIGPGFDCLGVAVNIYNKFFVEEVEEGIIFEGCADKFKNENNLIYVAMKKCFDKIGYKPTGLRIKIESDIPVSRGLGSSAACVVGGIVSANELAGGALNKKELLDLAVEVEGHPDNVNPAFCGGMTASISDNREVIYSKVKVSEGIKFCALIPDFTLSTEKARAVLPKSIDYKDGIFNVGRTALMISALNNGDFHLIKYACKDKLHQDYRAKLIENFYSIKKQCEKLNSLGVFLSGAGPTIMVMLREEDKDFSKNIKSFLETLKNKWEVRELKIDKLGTVVNNRKL.

Pro82–Ala92 provides a ligand contact to ATP.

This sequence belongs to the GHMP kinase family. Homoserine kinase subfamily.

It localises to the cytoplasm. The enzyme catalyses L-homoserine + ATP = O-phospho-L-homoserine + ADP + H(+). It participates in amino-acid biosynthesis; L-threonine biosynthesis; L-threonine from L-aspartate: step 4/5. In terms of biological role, catalyzes the ATP-dependent phosphorylation of L-homoserine to L-homoserine phosphate. This chain is Homoserine kinase, found in Clostridium botulinum (strain Langeland / NCTC 10281 / Type F).